Consider the following 466-residue polypeptide: MKPPLLVFIVCLLWLKDSHCAPTWKDKTAISENLKSFSEVGEIDADEEVKKALTGIKQMKIMMERKEKEHTNLMSTLKKCREEKQEALKLLNEVQEHLEEEERLCRESLADSWGECRSCLENNCMRIYTTCQPSWSSVKNKIERFFRKIYQFLFPFHEDNEKDLPISEKLIEEDAQLTQMEDVFSQLTVDVNSLFNRSFNVFRQMQQEFDQTFQSHFISDTDLTEPYFFPAFSKEPMTKADLEQCWDIPNFFQLFCNFSVSIYESVSETITKMLKAIEDLPKQDKAPDHGGLISKMLPGQDRGLCGELDQNLSRCFKFHEKCQKCQAHLSEDCPDVPALHTELDEAIRLVNVSNQQYGQILQMTRKHLEDTAYLVEKMRGQFGWVSELANQAPETEIIFNSIQVVPRIHEGNISKQDETMMTDLSILPSSNFTLKIPLEESAESSNFIGYVVAKALQHFKEHFKTW.

Residues 1–20 (MKPPLLVFIVCLLWLKDSHC) form the signal peptide. A coiled-coil region spans residues 57–111 (KQMKIMMERKEKEHTNLMSTLKKCREEKQEALKLLNEVQEHLEEEERLCRESLAD). Intrachain disulfides connect Cys105/Cys333, Cys116/Cys325, Cys119/Cys322, Cys124/Cys315, and Cys131/Cys305. Asn196, Asn257, Asn311, Asn351, Asn412, and Asn431 each carry an N-linked (GlcNAc...) asparagine glycan.

It belongs to the clusterin family.

It localises to the secreted. The polypeptide is Clusterin-like protein 1 (CLUL1) (Homo sapiens (Human)).